Consider the following 293-residue polypeptide: Putative metal ABC transporter substrate-binding protein Hpf (293 aa).

A signal peptide spans 1–22 (MRNSFKIMTALALGLFAMQANA). Positions 23–48 (KFKVVTTFTVIQDIAQNVAGNAATVE) are interaction with host components. Residues His-58, His-123, Glu-189, and Asp-264 each coordinate a divalent metal cation.

The protein belongs to the bacterial solute-binding protein 9 family. Interacts with host laminin and vitronectin. Can interact with both immobilized and soluble vitronectin.

The protein localises to the cell outer membrane. It is found in the cell surface. Its subcellular location is the periplasm. Its function is as follows. Part of an ATP-binding cassette (ABC) transport system involved in metal import. Binds a metal with high affinity and specificity and delivers it to the membrane permease for translocation into the cytoplasm. Acts as an adhesin that promotes binding of H.influenzae to host laminin and vitronectin. In addition, interaction with serum vitronectin plays an important role in bacterial serum resistance. The protein is Putative metal ABC transporter substrate-binding protein Hpf (hpf) of Haemophilus influenzae (strain NTHi 3655).